The chain runs to 495 residues: Cytochrome P450 monooxygenase FrzC (495 aa).

Residues 8 to 28 (GLVVGLWVTYHILLGTYNVFF) traverse the membrane as a helical segment. Cysteine 437 contributes to the heme binding site.

It belongs to the cytochrome P450 family. Requires heme as cofactor.

It localises to the membrane. It carries out the reaction (S,S)-2,5-di-(p-hydroxybenzyl)piperazine + reduced [NADPH--hemoprotein reductase] + O2 = (1S,4S)-4-[(4-hydroxyphenyl)methyl]-2,5-diazaspiro[bicyclo[3.2.1]octane-6,1'-cyclohexane]-2',5'-dien-4'-one + oxidized [NADPH--hemoprotein reductase] + 2 H2O + H(+). Its pathway is secondary metabolite biosynthesis. In terms of biological role, cytochrome P450 monooxygenase; part of the gene cluster that mediates the biosynthesis of the alkaloid (-)-FR901483, a potent immunosuppressant that shows efficacy in animal models and a probable inhibitor of purine nucleotide biosynthesis by targeting phosphoribosylpyrophosphate amidotransferase (PPAT). Within the pathway, FrzC catalyzes the coupling between N10 and C1' to produce a 1,4-diazabicyclo[3.2.1]octane spiro-fused to a 2,5-cyclohexadienone. FrzC probably first catalyzes homolysis of the N-H bond to generate the N10 radical which is followed by an O-H abstraction to give the phenolic radical which can be delocalized to C1'. Radical coupling between N10 and C1' then forms. The biosynthesis of (-)-FR901483 starts with the condensation of two L-tyrosines to yield (S,S)-dityrosyl-piperazine. This process occurs in 3 steps with the non-canonical nonribosomal peptide synthetase FrzA catalyzing the reduction of L-tyrosine into L-tyrosinal, the spontaneous condensation of 2 L-tyrosinal units, and the subsequent reduction by the NmrA-like family domain-containing oxidoreductase FrzB. The cytochrome P450 monooxygenase FrzC then performs coupling between N10 and C1' to morph the piperazine into a 1,4-diazabicyclo[3.2.1]octane spiro-fused to a 2,5-cyclohexadienone. The dienone portion is further reduced to cyclohexanone by the flavin-dependent reductase FrzD. The methyltranserases (MTs) FrzE and FrzF are then involved in the methylation at the C10' amine and the C4 phenolic oxygen, respectively. The order of the two MTs appear to be interchangeable. Cleavage of the C9-N10' bond by the dioxygenase FrzG then leads to formation of a conjugated iminium. In addition to the oxidation of C9, an additional dehydrogenation between C7 and C8 can occur to give a likely shunt product. The next biosynthetic step is the intramolecular aldol condensation catalyzed by the newly identified aldolase FrzH to yield an aza-tricyclic product with the formation of a C9-C3' bond. The short-chain dehydrogenase/reductase FrzI then produces dephospho-(-)-FR901483 that is phosphorylated at C4'-OH into (-)-FR901483 by the phosphotransferase FrzJ. This Cladobotryum sp protein is Cytochrome P450 monooxygenase FrzC.